Here is a 944-residue protein sequence, read N- to C-terminus: ATP-dependent helicase fft1 (944 aa).

Disordered regions lie at residues A89 to N109 and S174 to P246. Residues D92–S108 show a composition bias toward basic and acidic residues. Residues S174–E184 show a composition bias toward polar residues. The segment covering S186–T203 has biased composition (basic and acidic residues). Over residues L217–L227 the composition is skewed to acidic residues. Over residues Q230 to P246 the composition is skewed to polar residues. The Helicase ATP-binding domain maps to C426–K592. Position 439–446 (D439–T446) interacts with ATP. A DEGH box motif is present at residues D543 to H546. The 158-residue stretch at K766 to S923 folds into the Helicase C-terminal domain.

The protein belongs to the SNF2/RAD54 helicase family.

Its subcellular location is the nucleus. The enzyme catalyses ATP + H2O = ADP + phosphate + H(+). In terms of biological role, DNA helicase that possesses intrinsic ATP-dependent nucleosome-remodeling activity and is required for heterochromatin organization. The polypeptide is ATP-dependent helicase fft1 (fft1) (Schizosaccharomyces pombe (strain 972 / ATCC 24843) (Fission yeast)).